A 272-amino-acid polypeptide reads, in one-letter code: 2-succinyl-6-hydroxy-2,4-cyclohexadiene-1-carboxylate synthase (272 aa).

This sequence belongs to the AB hydrolase superfamily. MenH family. In terms of assembly, monomer.

It carries out the reaction 5-enolpyruvoyl-6-hydroxy-2-succinyl-cyclohex-3-ene-1-carboxylate = (1R,6R)-6-hydroxy-2-succinyl-cyclohexa-2,4-diene-1-carboxylate + pyruvate. It functions in the pathway quinol/quinone metabolism; 1,4-dihydroxy-2-naphthoate biosynthesis; 1,4-dihydroxy-2-naphthoate from chorismate: step 3/7. It participates in quinol/quinone metabolism; menaquinone biosynthesis. In terms of biological role, catalyzes a proton abstraction reaction that results in 2,5-elimination of pyruvate from 2-succinyl-5-enolpyruvyl-6-hydroxy-3-cyclohexene-1-carboxylate (SEPHCHC) and the formation of 2-succinyl-6-hydroxy-2,4-cyclohexadiene-1-carboxylate (SHCHC). The sequence is that of 2-succinyl-6-hydroxy-2,4-cyclohexadiene-1-carboxylate synthase from Yersinia pestis bv. Antiqua (strain Nepal516).